Here is a 429-residue protein sequence, read N- to C-terminus: Adenylosuccinate synthetase (429 aa).

GTP-binding positions include 12-18 and 40-42; these read GDEGKGK and GHT. Asp13 acts as the Proton acceptor in catalysis. The Mg(2+) site is built by Asp13 and Gly40. IMP is bound by residues 13 to 16, 38 to 41, Thr128, Arg142, Gln223, Thr238, and Arg302; these read DEGK and NAGH. His41 (proton donor) is an active-site residue. Residue 298–304 participates in substrate binding; the sequence is TTTGRPR. GTP-binding positions include Arg304, 330-332, and 412-414; these read SID and SVG.

Belongs to the adenylosuccinate synthetase family. In terms of assembly, homodimer. Mg(2+) serves as cofactor.

It localises to the cytoplasm. It carries out the reaction IMP + L-aspartate + GTP = N(6)-(1,2-dicarboxyethyl)-AMP + GDP + phosphate + 2 H(+). Its pathway is purine metabolism; AMP biosynthesis via de novo pathway; AMP from IMP: step 1/2. Plays an important role in the de novo pathway of purine nucleotide biosynthesis. Catalyzes the first committed step in the biosynthesis of AMP from IMP. This chain is Adenylosuccinate synthetase, found in Lysinibacillus sphaericus (strain C3-41).